A 98-amino-acid polypeptide reads, in one-letter code: NADH-ubiquinone oxidoreductase chain 4L (98 aa).

The next 3 membrane-spanning stretches (helical) occupy residues 2-22, 29-49, and 61-81; these read TPIF…TLIF, SLLC…LIIL, and ILLL…LVMV.

Belongs to the complex I subunit 4L family. As to quaternary structure, core subunit of respiratory chain NADH dehydrogenase (Complex I) which is composed of 45 different subunits.

The protein resides in the mitochondrion inner membrane. It catalyses the reaction a ubiquinone + NADH + 5 H(+)(in) = a ubiquinol + NAD(+) + 4 H(+)(out). Core subunit of the mitochondrial membrane respiratory chain NADH dehydrogenase (Complex I) which catalyzes electron transfer from NADH through the respiratory chain, using ubiquinone as an electron acceptor. Part of the enzyme membrane arm which is embedded in the lipid bilayer and involved in proton translocation. In Avahi cleesei (Cleese's woolly lemur), this protein is NADH-ubiquinone oxidoreductase chain 4L (MT-ND4L).